A 411-amino-acid polypeptide reads, in one-letter code: Cytochrome P450 monooxygenase sirE (411 aa).

N-linked (GlcNAc...) asparagine glycosylation is found at Asn12 and Asn149. The chain crosses the membrane as a helical span at residues 181–203 (FLNVISIFTVMMASLNVLYDILA). Residue Asn342 is glycosylated (N-linked (GlcNAc...) asparagine). Cys352 is a binding site for heme.

The protein belongs to the cytochrome P450 family. Requires heme as cofactor.

Its subcellular location is the membrane. Its pathway is mycotoxin biosynthesis. In terms of biological role, cytochrome P450 monooxygenase; part of the gene cluster that mediates the biosynthesis of sirodesmin PL, an epipolythiodioxopiperazine (ETP) characterized by a disulfide bridged cyclic dipeptide and that acts as a phytotoxin which is involved in the blackleg didease of canola. SirD catalyzes the O-prenylation of L-tyrosine (L-Tyr) in the presence of dimethylallyl diphosphate (DMAPP) to yield 4-O-dimethylallyl-L-Tyr, and therefore represents probably the first pathway-specific enzyme in the biosynthesis of sirodesmin PL. 4-O-dimethylallyl-L-Tyr, then undergoes condensation with L-Ser in a reaction catalyzed by the non-ribosomal peptide synthase sirP to form the diketopiperazine (DKP) backbone. Further bishydroxylation of the DKP performed by the cytochrome P450 monooxygenase sirC leads to the production of the intermediate phomamide. This step is essential to form the reactive thiol group required for toxicity of sirodesmin PL. The next steps of sirodesmin biosynthesis are not well understood yet, but some predictions could be made from intermediate compounds identification. Phomamide is converted into phomalizarine via oxidation, probably by sirT. Further oxidation, methylation (by sirM or sirN) and reduction steps convert phomalizarine to deacetyl sirodesmin. Finally, acetyltransferase sirH probably acetylates deacetyl sirodesmin to produce sirodesmin PL. The sequence is that of Cytochrome P450 monooxygenase sirE from Leptosphaeria maculans (Blackleg fungus).